The sequence spans 744 residues: Biotin sulfoxide reductase (744 aa).

S121 is a Mo-bis(molybdopterin guanine dinucleotide) binding site.

The protein belongs to the prokaryotic molybdopterin-containing oxidoreductase family. Mo-bis(molybdopterin guanine dinucleotide) serves as cofactor.

This enzyme may serve as a scavenger, allowing the cell to utilize biotin sulfoxide as a biotin source. It reduces a spontaneous oxidation product of biotin, D-biotin D-sulfoxide (BSO or BDS), back to biotin. In Cereibacter sphaeroides (Rhodobacter sphaeroides), this protein is Biotin sulfoxide reductase.